A 616-amino-acid chain; its full sequence is Cleavage stimulation factor subunit 2 tau variant (616 aa).

Residues 16–94 (RSVFVGNIPY…RALRVDNAAS (79 aa)) enclose the RRM domain. 2 disordered regions span residues 203-241 (GKSQSVSVSGPGPGPGPGLCPGPNVLLNQQNPPAPQPQH) and 262-418 (IPAP…SRAM). Low complexity-rich tracts occupy residues 223 to 233 (PGPNVLLNQQN) and 319 to 331 (VTPGGLPPRGLLG). Thr320 is modified (phosphothreonine). Positions 368-381 (SGHDTRGPSSHEMR) are enriched in basic and acidic residues. A 1-1 repeat occupies 418-422 (METRA). The interval 418-462 (METRAMETEVLETRVMERRGMETCAMETRGMEARGMDARGLEMRG) is 9 X 5 AA tandem repeats of M-E-T-R-[AG]. Residues 423 to 427 (METEV) form a 1-2; approximate repeat. The 1-3; approximate repeat unit spans residues 428–432 (LETRV). Residues 433–437 (MERRG) form a 1-4; approximate repeat. Residues 438–442 (METCA) form a 1-5; approximate repeat. One copy of the 1-6 repeat lies at 443–447 (METRG). A 1-7; approximate repeat occupies 448 to 452 (MEARG). Residues 453 to 457 (MDARG) form a 1-8; approximate repeat. Residues 458–462 (LEMRG) form a 1-9; approximate repeat. A run of 4 repeats spans residues 505-509 (GAGMQ), 510-514 (GTGIQ), 515-519 (GTGMQ), and 520-524 (GAGIQ). A 9 X 5 AA tandem repeats of G-[AT]-G-[MI]-Q region spans residues 505 to 549 (GAGMQGTGIQGTGMQGAGIQGGGMQGAGIQGVSIQGGGIQGGGIQ). A 2-5; approximate repeat occupies 525–529 (GGGMQ). A 2-6 repeat occupies 530-534 (GAGIQ). One copy of the 2-7; approximate repeat lies at 535-539 (GVSIQ). A 2-8; approximate repeat occupies 540–544 (GGGIQ). The interval 542–573 (GIQGGGIQGASKQGGSQPSSFSPGQSQVTPQD) is disordered. A 2-9; approximate repeat occupies 545–549 (GGGIQ). A compositionally biased stretch (low complexity) spans 550–568 (GASKQGGSQPSSFSPGQSQ). Ser563 bears the Phosphoserine mark.

The protein localises to the nucleus. Functionally, may play a significant role in AAUAAA-independent mRNA polyadenylation in germ cells. Directly involved in the binding to pre-mRNAs. This Homo sapiens (Human) protein is Cleavage stimulation factor subunit 2 tau variant (CSTF2T).